We begin with the raw amino-acid sequence, 79 residues long: Small ribosomal subunit protein uS17 (79 aa).

Belongs to the universal ribosomal protein uS17 family. As to quaternary structure, part of the 30S ribosomal subunit.

One of the primary rRNA binding proteins, it binds specifically to the 5'-end of 16S ribosomal RNA. This is Small ribosomal subunit protein uS17 from Bartonella henselae (strain ATCC 49882 / DSM 28221 / CCUG 30454 / Houston 1) (Rochalimaea henselae).